A 463-amino-acid polypeptide reads, in one-letter code: Cis-zeatin O-glucosyltransferase 2 (463 aa).

Residue His-21 is the Proton acceptor of the active site. 2 residues coordinate an anthocyanidin: His-21 and Asn-91. The Charge relay role is filled by Asp-127. UDP-alpha-D-glucose-binding residues include Ala-339, Gln-341, His-356, Trp-359, Asn-360, Ser-361, Glu-364, Asp-380, and Gln-381.

It belongs to the UDP-glycosyltransferase family. As to expression, highly expressed in root. Expressed at much lower level in kernel. Weakly or not expressed in expressed in stems and leaves.

The enzyme catalyses cis-zeatin + UDP-alpha-D-glucose = O-beta-D-glucosyl-cis-zeatin + UDP + H(+). Functionally, utilizes UDP-glucose as the sugar donor and catalyzes the formation of O-beta-D-glucosyl-cis-zeatin from cis-zeatin. May regulate active versus storage forms of cytokinins and could have an impact on seed growth. This Zea mays (Maize) protein is Cis-zeatin O-glucosyltransferase 2.